A 52-amino-acid polypeptide reads, in one-letter code: Ornatin-C (52 aa).

A Cell attachment site motif is present at residues 42–44; the sequence is RGD.

This sequence belongs to the ornatin family.

The protein localises to the secreted. Potent inhibitor of fibrinogen interaction with platelet receptors expressed on glycoprotein IIb-IIIa complex. May prevent blood from clotting during either feeding and/or storage of ingested blood. The protein is Ornatin-C of Placobdella ornata (Turtle leech).